A 434-amino-acid chain; its full sequence is G2/mitotic-specific cyclin-2 (434 aa).

Belongs to the cyclin family. Cyclin AB subfamily. As to quaternary structure, interacts with the CDC2 protein kinase to form a serine/threonine kinase holoenzyme complex also known as maturation promoting factor (MPF). The cyclin subunit imparts substrate specificity to the complex.

In terms of biological role, essential for the control of the cell cycle at the G2/M (mitosis) transition. The protein is G2/mitotic-specific cyclin-2 of Medicago sativa subsp. varia (Alfalfa).